The primary structure comprises 376 residues: Putative glutamate--cysteine ligase 2 (376 aa).

Belongs to the glutamate--cysteine ligase type 2 family. YbdK subfamily.

The enzyme catalyses L-cysteine + L-glutamate + ATP = gamma-L-glutamyl-L-cysteine + ADP + phosphate + H(+). Functionally, ATP-dependent carboxylate-amine ligase which exhibits weak glutamate--cysteine ligase activity. The sequence is that of Putative glutamate--cysteine ligase 2 from Paracoccus denitrificans (strain Pd 1222).